The chain runs to 132 residues: Small ribosomal subunit protein uS8 (132 aa).

Belongs to the universal ribosomal protein uS8 family. In terms of assembly, part of the 30S ribosomal subunit. Contacts proteins S5 and S12.

One of the primary rRNA binding proteins, it binds directly to 16S rRNA central domain where it helps coordinate assembly of the platform of the 30S subunit. This is Small ribosomal subunit protein uS8 from Leuconostoc citreum (strain KM20).